The following is a 914-amino-acid chain: Serine/threonine-protein kinase MST20 (914 aa).

Residues 1 to 12 (MDGHSNFTQPSD) are compositionally biased toward polar residues. Disordered regions lie at residues 1–140 (MDGH…QLQN), 156–184 (NQYS…LTFN), and 251–286 (AMSE…VLRK). Composition is skewed to low complexity over residues 13 to 26 (TSHA…SSSS), 63 to 72 (RSSTSLRRAP), and 79 to 97 (TPTS…PSSS). The span at 122–136 (ARDRDSDPARNDHGH) shows a compositional bias: basic and acidic residues. Basic residues predominate over residues 156 to 166 (NQYSAASHRRS). Residues 175-184 (PQSSNSLTFN) are compositionally biased toward polar residues. Positions 271–280 (RYSDETKEPK) are enriched in basic and acidic residues. Positions 306-319 (ISAPENPVHVTHVG) constitute a CRIB domain. Residues 408–615 (SPMISPPASP…RHRSRQSNGL (208 aa)) form a disordered region. Low complexity-rich tracts occupy residues 516–548 (AYPA…QAQA) and 562–576 (QPQA…SQHQ). Polar residues predominate over residues 577-586 (YSRPTDANGA). Positions 587–596 (QQTQRPQQPQ) are enriched in low complexity. The region spanning 634 to 885 (YRSFTKIGQG…AHDLLRHEFM (252 aa)) is the Protein kinase domain. Residues 640–648 (IGQGASGGV) and Lys663 each bind ATP. The active-site Proton acceptor is Asp753.

Belongs to the protein kinase superfamily. STE Ser/Thr protein kinase family. STE20 subfamily.

The protein localises to the cytoplasm. It is found in the nucleus. It catalyses the reaction L-seryl-[protein] + ATP = O-phospho-L-seryl-[protein] + ADP + H(+). The catalysed reaction is L-threonyl-[protein] + ATP = O-phospho-L-threonyl-[protein] + ADP + H(+). In terms of biological role, MAP4K component of the MAPK pathway required for the mating pheromone response and the regulation of cell polarity and cell cycle. Phosphorylates histone H2B to form H2BS10ph. Is involved in conidiation, aerial hyphal growth and infection-related morphogenesis. The polypeptide is Serine/threonine-protein kinase MST20 (MST20) (Pyricularia oryzae (strain 70-15 / ATCC MYA-4617 / FGSC 8958) (Rice blast fungus)).